An 892-amino-acid chain; its full sequence is Translation initiation factor IF-2 (892 aa).

Residues threonine 66–alanine 305 are disordered. Residues serine 68–valine 82 show a composition bias toward polar residues. Composition is skewed to basic and acidic residues over residues valine 93–valine 159 and aspartate 166–lysine 216. Over residues glycine 254 to lysine 269 the composition is skewed to basic residues. A compositionally biased stretch (basic and acidic residues) spans histidine 270–alanine 282. Residues proline 391–lysine 560 form the tr-type G domain. The tract at residues glycine 400–threonine 407 is G1. Position 400 to 407 (glycine 400 to threonine 407) interacts with GTP. A G2 region spans residues glycine 425–histidine 429. A G3 region spans residues aspartate 446–glycine 449. Residues aspartate 446–histidine 450 and asparagine 500–aspartate 503 each bind GTP. The G4 stretch occupies residues asparagine 500–aspartate 503. A G5 region spans residues serine 536–lysine 538.

Belongs to the TRAFAC class translation factor GTPase superfamily. Classic translation factor GTPase family. IF-2 subfamily.

The protein localises to the cytoplasm. One of the essential components for the initiation of protein synthesis. Protects formylmethionyl-tRNA from spontaneous hydrolysis and promotes its binding to the 30S ribosomal subunits. Also involved in the hydrolysis of GTP during the formation of the 70S ribosomal complex. The chain is Translation initiation factor IF-2 from Salmonella typhi.